The following is an 829-amino-acid chain: Telomere length regulation protein TEL2 homolog (829 aa).

Disordered stretches follow at residues 446–493 (SADF…DDLV) and 620–641 (SEKP…PHSI). Low complexity predominate over residues 456–466 (SSPSKSPLSSP). Basic and acidic residues predominate over residues 467–480 (EVREKSKVKVKADQ). Residues 482–493 (SDSDLDSDDDLV) show a composition bias toward acidic residues. Positions 629–641 (AESGSVNTDPHSI) are enriched in polar residues.

The protein belongs to the TEL2 family.

Its subcellular location is the cytoplasm. The protein localises to the membrane. It localises to the nucleus. The protein resides in the chromosome. It is found in the telomere. Its function is as follows. Regulator of the DNA damage response (DDR). Part of the TTT complex that is required to stabilize protein levels of the phosphatidylinositol 3-kinase-related protein kinase (PIKK) family proteins. Promotes assembly, stabilizes and maintains the activity of TORC complexes, which regulate cell growth and survival in response to nutrient and hormonal signals. May be involved in telomere length regulation. This is Telomere length regulation protein TEL2 homolog (telo2) from Xenopus tropicalis (Western clawed frog).